A 220-amino-acid chain; its full sequence is Zinc-finger homeodomain protein 2 (220 aa).

The segment covering 1–11 (MNFEDQEEDME) has biased composition (acidic residues). The segment at 1–40 (MNFEDQEEDMEMSGVNPPCGYDSLSGEGATSSGGGGVGRS) is disordered. A compositionally biased stretch (gly residues) spans 31 to 40 (SSGGGGVGRS). The ZF-HD dimerization-type zinc-finger motif lies at 49–98 (YRECLKNHAVNIGGHAVDGCCEFMPSGEDGTLDALKCAACGCHRNFHRKE). A disordered region spans residues 100–160 (ESIGGRAHRV…SSSGGTTKRF (61 aa)). The segment at residues 157 to 220 (TKRFRTKFTA…NNKNSLGKKP (64 aa)) is a DNA-binding region (homeobox; atypical).

As to quaternary structure, homo or heterodimer. Interacts with ZHD1, ZHD3, ZHD4, ZHD5, ZHD6, ZHD7, ZHD8, ZHD9, ZHD10 and ZHD11. Mostly expressed in flowers and, to a lower extent, in inflorescence, stems and leaves.

It is found in the nucleus. Essential protein. Putative transcription factor. This Arabidopsis thaliana (Mouse-ear cress) protein is Zinc-finger homeodomain protein 2 (ZHD1).